The chain runs to 275 residues: Dermonecrotic toxin SpeSicTox-betaIIA2ii (275 aa).

His-5 is an active-site residue. Mg(2+) contacts are provided by Glu-25 and Asp-27. His-41 serves as the catalytic Nucleophile. Disulfide bonds link Cys-45-Cys-51 and Cys-47-Cys-190. Asp-85 provides a ligand contact to Mg(2+).

It belongs to the arthropod phospholipase D family. Class II subfamily. Mg(2+) is required as a cofactor. In terms of tissue distribution, expressed by the venom gland.

The protein resides in the secreted. The catalysed reaction is an N-(acyl)-sphingosylphosphocholine = an N-(acyl)-sphingosyl-1,3-cyclic phosphate + choline. It catalyses the reaction an N-(acyl)-sphingosylphosphoethanolamine = an N-(acyl)-sphingosyl-1,3-cyclic phosphate + ethanolamine. It carries out the reaction a 1-acyl-sn-glycero-3-phosphocholine = a 1-acyl-sn-glycero-2,3-cyclic phosphate + choline. The enzyme catalyses a 1-acyl-sn-glycero-3-phosphoethanolamine = a 1-acyl-sn-glycero-2,3-cyclic phosphate + ethanolamine. In terms of biological role, dermonecrotic toxins cleave the phosphodiester linkage between the phosphate and headgroup of certain phospholipids (sphingolipid and lysolipid substrates), forming an alcohol (often choline) and a cyclic phosphate. This toxin acts on sphingomyelin (SM). It may also act on ceramide phosphoethanolamine (CPE), lysophosphatidylcholine (LPC) and lysophosphatidylethanolamine (LPE), but not on lysophosphatidylserine (LPS), and lysophosphatidylglycerol (LPG). It acts by transphosphatidylation, releasing exclusively cyclic phosphate products as second products. Induces dermonecrosis, hemolysis, increased vascular permeability, edema, inflammatory response, and platelet aggregation. In Sicarius peruensis (Six-eyed sand spider), this protein is Dermonecrotic toxin SpeSicTox-betaIIA2ii.